We begin with the raw amino-acid sequence, 199 residues long: UPF0329 protein ECU01_0120/ECU01_1490/ECU08_0050 (199 aa).

Belongs to the UPF0329 family.

The polypeptide is UPF0329 protein ECU01_0120/ECU01_1490/ECU08_0050 (Encephalitozoon cuniculi (strain GB-M1) (Microsporidian parasite)).